Reading from the N-terminus, the 215-residue chain is Transmembrane emp24 domain-containing protein 11 (215 aa).

The first 17 residues, 1 to 17, serve as a signal peptide directing secretion; it reads MQIQTILLCFSFSFSAA. The Lumenal portion of the chain corresponds to 18-167; that stretch reads FYFHAGEREE…ILKEQDYQRD (150 aa). A GOLD domain is found at 27-125; sequence EKCIIEDIPS…KLRIHLDIRV (99 aa). An N-linked (GlcNAc...) asparagine glycan is attached at Asn105. Positions 136–171 form a coiled coil; that stretch reads QAKDKVNEVTFKLQHLIEQVEQILKEQDYQRDREEN. A helical membrane pass occupies residues 168–185; sequence REENFRITSEDTNRNVLW. Over 186–215 the chain is Cytoplasmic; that stretch reads WAFAQILIFISVGIFQMKHLKDFFIAKKLV. The COPII vesicle coat-binding motif lies at 208 to 209; that stretch reads FF. A COPI vesicle coat-binding motif is present at residues 208–215; that stretch reads FFIAKKLV.

Belongs to the EMP24/GP25L family.

Its subcellular location is the endoplasmic reticulum membrane. Part of a complex whose function is to bind Ca(2+) to the ER membrane and thereby regulate the retention of ER resident proteins. The chain is Transmembrane emp24 domain-containing protein 11 (Tmed11) from Mus musculus (Mouse).